Reading from the N-terminus, the 214-residue chain is Pyrrolidone-carboxylate peptidase (214 aa).

Active-site residues include Glu-78, Cys-141, and His-165.

It belongs to the peptidase C15 family. In terms of assembly, homotetramer.

Its subcellular location is the cytoplasm. It carries out the reaction Release of an N-terminal pyroglutamyl group from a polypeptide, the second amino acid generally not being Pro.. In terms of biological role, removes 5-oxoproline from various penultimate amino acid residues except L-proline. This chain is Pyrrolidone-carboxylate peptidase, found in Streptococcus pneumoniae serotype 2 (strain D39 / NCTC 7466).